A 417-amino-acid chain; its full sequence is Serine hydroxymethyltransferase (417 aa).

(6S)-5,6,7,8-tetrahydrofolate-binding positions include Leu121 and 125–127 (GHL). Residue Lys229 is modified to N6-(pyridoxal phosphate)lysine. 355–357 (SPF) provides a ligand contact to (6S)-5,6,7,8-tetrahydrofolate.

This sequence belongs to the SHMT family. Homodimer. The cofactor is pyridoxal 5'-phosphate.

Its subcellular location is the cytoplasm. The catalysed reaction is (6R)-5,10-methylene-5,6,7,8-tetrahydrofolate + glycine + H2O = (6S)-5,6,7,8-tetrahydrofolate + L-serine. Its pathway is one-carbon metabolism; tetrahydrofolate interconversion. The protein operates within amino-acid biosynthesis; glycine biosynthesis; glycine from L-serine: step 1/1. Catalyzes the reversible interconversion of serine and glycine with tetrahydrofolate (THF) serving as the one-carbon carrier. This reaction serves as the major source of one-carbon groups required for the biosynthesis of purines, thymidylate, methionine, and other important biomolecules. Also exhibits THF-independent aldolase activity toward beta-hydroxyamino acids, producing glycine and aldehydes, via a retro-aldol mechanism. This Shewanella frigidimarina (strain NCIMB 400) protein is Serine hydroxymethyltransferase.